Consider the following 159-residue polypeptide: Endoribonuclease YbeY (159 aa).

Zn(2+)-binding residues include H120, H124, and H130.

The protein belongs to the endoribonuclease YbeY family. It depends on Zn(2+) as a cofactor.

Its subcellular location is the cytoplasm. Single strand-specific metallo-endoribonuclease involved in late-stage 70S ribosome quality control and in maturation of the 3' terminus of the 16S rRNA. This is Endoribonuclease YbeY from Parafrankia sp. (strain EAN1pec).